The sequence spans 333 residues: Adenosine deaminase (333 aa).

Residues H12 and H14 each coordinate Zn(2+). The substrate site is built by H14, D16, and G170. Position 197 (H197) interacts with Zn(2+). Catalysis depends on E200, which acts as the Proton donor. Position 278 (D278) interacts with Zn(2+). D279 contributes to the substrate binding site.

This sequence belongs to the metallo-dependent hydrolases superfamily. Adenosine and AMP deaminases family. Adenosine deaminase subfamily. Zn(2+) is required as a cofactor.

The enzyme catalyses adenosine + H2O + H(+) = inosine + NH4(+). It catalyses the reaction 2'-deoxyadenosine + H2O + H(+) = 2'-deoxyinosine + NH4(+). Its function is as follows. Catalyzes the hydrolytic deamination of adenosine and 2-deoxyadenosine. The chain is Adenosine deaminase from Salmonella paratyphi C (strain RKS4594).